A 464-amino-acid chain; its full sequence is Argininosuccinate lyase (464 aa).

It belongs to the lyase 1 family. Argininosuccinate lyase subfamily.

It localises to the cytoplasm. The enzyme catalyses 2-(N(omega)-L-arginino)succinate = fumarate + L-arginine. It participates in amino-acid biosynthesis; L-arginine biosynthesis; L-arginine from L-ornithine and carbamoyl phosphate: step 3/3. The chain is Argininosuccinate lyase from Pseudomonas aeruginosa (strain ATCC 15692 / DSM 22644 / CIP 104116 / JCM 14847 / LMG 12228 / 1C / PRS 101 / PAO1).